Here is a 275-residue protein sequence, read N- to C-terminus: Envelope glycoprotein (275 aa).

Disulfide bonds link cysteine 1-cysteine 10, cysteine 18-cysteine 27, and cysteine 58-cysteine 62. Asparagine 122 carries an N-linked (GlcNAc...) asparagine; by host glycan. 4 cysteine pairs are disulfide-bonded: cysteine 164-cysteine 194, cysteine 187-cysteine 239, cysteine 204-cysteine 209, and cysteine 240-cysteine 245.

This sequence belongs to the hantavirus envelope glycoprotein family. Homodimer. Homotetramer; forms heterotetrameric Gn-Gc spikes in the pre-fusion conformation. Homotrimer; forms homotrimer in the post-fusion conformation at acidic pH. Interacts (via C-terminus) with the nucleoprotein. In terms of processing, envelope polyprotein precursor is quickly cleaved in vivo just after synthesis, presumably by host signal peptidase.

It localises to the virion membrane. The protein resides in the host cell surface. The protein localises to the host Golgi apparatus membrane. Its subcellular location is the host endoplasmic reticulum membrane. Forms homotetramers with glycoprotein N at the surface of the virion. Attaches the virion to host cell receptors including integrin ITGAV/ITGB3. This attachment induces virion internalization predominantly through clathrin-dependent endocytosis. Class II fusion protein that promotes fusion of viral membrane with host endosomal membrane after endocytosis of the virion. This Homo sapiens (Human) protein is Envelope glycoprotein (GP).